Here is a 274-residue protein sequence, read N- to C-terminus: Enoyl-CoA isomerase/hydratase fer4 (274 aa).

Substrate contacts are provided by residues 77–81 (AGADL) and Gly-124. Positions 79-109 (ADLKERREMSEAEVIEFLQDLRHMLEQVEKL) form a coiled coil.

The protein belongs to the enoyl-CoA hydratase/isomerase family.

It carries out the reaction a (3S)-3-hydroxyacyl-CoA = a (2E)-enoyl-CoA + H2O. The enzyme catalyses a 4-saturated-(3S)-3-hydroxyacyl-CoA = a (3E)-enoyl-CoA + H2O. The protein operates within siderophore biosynthesis. In terms of biological role, enoyl-CoA isomerase/hydratase; part of the gene cluster that mediates the biosynthesis of siderophore ferrichrome A which is contributing to organismal virulence. The first step of ferrichrome A biosynthesis is performed by the HMG-CoA synthase hcs1 which catalyzes the generation of HMG-CoA and CoA using acetoacetyl-CoA and acetyl-CoA as substrates. The enoyl-CoA isomerase/hydratase fer4 then catalyzes the conversion of hcs1-produced HMG-CoA to methylglutaconyl-CoA. The acyltransferase fer5 then fuses the fer4-generated methylglutaconyl-CoA with sid1-generated hydroxyornithine to yield methylglutaconyl hydroxyornithine. Methylglutaconyl hydroxyornithine is then available for use by the NRPS fer3 to generate ferrichrome A. The polypeptide is Enoyl-CoA isomerase/hydratase fer4 (Mycosarcoma maydis (Corn smut fungus)).